The chain runs to 212 residues: Probable GTP-binding protein EngB (212 aa).

One can recognise an EngB-type G domain in the interval 22–212; sequence GVSEFAFFGR…NILSLIAKRI (191 aa). Residues 30–37, 57–61, 95–98, 162–165, and 192–195 contribute to the GTP site; these read GRSNAGKS, GMTRE, DLPG, TKAD, and ISSA. Positions 37 and 59 each coordinate Mg(2+).

The protein belongs to the TRAFAC class TrmE-Era-EngA-EngB-Septin-like GTPase superfamily. EngB GTPase family. Requires Mg(2+) as cofactor.

Functionally, necessary for normal cell division and for the maintenance of normal septation. In Treponema denticola (strain ATCC 35405 / DSM 14222 / CIP 103919 / JCM 8153 / KCTC 15104), this protein is Probable GTP-binding protein EngB.